A 467-amino-acid chain; its full sequence is 3-isopropylmalate dehydratase large subunit (467 aa).

Residues Cys-349, Cys-409, and Cys-412 each coordinate [4Fe-4S] cluster.

This sequence belongs to the aconitase/IPM isomerase family. LeuC type 1 subfamily. Heterodimer of LeuC and LeuD. It depends on [4Fe-4S] cluster as a cofactor.

The enzyme catalyses (2R,3S)-3-isopropylmalate = (2S)-2-isopropylmalate. It participates in amino-acid biosynthesis; L-leucine biosynthesis; L-leucine from 3-methyl-2-oxobutanoate: step 2/4. Catalyzes the isomerization between 2-isopropylmalate and 3-isopropylmalate, via the formation of 2-isopropylmaleate. The chain is 3-isopropylmalate dehydratase large subunit from Ruegeria sp. (strain TM1040) (Silicibacter sp.).